Consider the following 429-residue polypeptide: Histidine--tRNA ligase (429 aa).

This sequence belongs to the class-II aminoacyl-tRNA synthetase family. Homodimer.

It is found in the cytoplasm. It catalyses the reaction tRNA(His) + L-histidine + ATP = L-histidyl-tRNA(His) + AMP + diphosphate + H(+). This Pseudomonas syringae pv. tomato (strain ATCC BAA-871 / DC3000) protein is Histidine--tRNA ligase.